The following is a 1168-amino-acid chain: TBC1 domain family member 1 (1168 aa).

Ser-146 is modified (phosphoserine). The segment at 203-238 is disordered; that stretch reads VSGSRGSESPRPNPPHAAPTGSQEPVRRPMRKSFSQ. Ser-235 is subject to Phosphoserine; by PKB/AKT1. Ser-237 bears the Phosphoserine mark. The PID domain occupies 246–404; it reads FRKELQDGGL…LHKLCERIEG (159 aa). The residue at position 503 (Ser-503) is a Phosphoserine. Phosphothreonine; by PKB/AKT1 is present on Thr-505. Phosphoserine is present on residues Ser-507, Ser-525, and Ser-527. Positions 532 to 542 are enriched in low complexity; that stretch reads SSLSSTLSNTS. Disordered regions lie at residues 532-551 and 564-587; these read SSLSSTLSNTSKEPSVCEKE and GSSEDLSSDSESHLPEEPAPLSPQ. Ser-565, Ser-566, Ser-570, Ser-571, and Ser-585 each carry phosphoserine. A Phosphothreonine modification is found at Thr-596. The residue at position 614 (Ser-614) is a Phosphoserine. Ser-627 bears the Phosphoserine; by PKB/AKT1 mark. Disordered stretches follow at residues 628–658 and 678–717; these read VSTETPHERKDFESKANHLGDSGGTPVKTRR and SSSRYEDYSELGELPPRSPLEPVCEDGPFGPPPEEKKRTS. Positions 632-645 are enriched in basic and acidic residues; the sequence is TPHERKDFESKANH. A phosphoserine mark is found at Ser-695 and Ser-941. A Rab-GAP TBC domain is found at 800-994; the sequence is GVPRHHRGEI…RVFDMIFLQG (195 aa). Residue Tyr-952 is modified to Phosphotyrosine. Residue Thr-1131 is modified to Phosphothreonine. Residues 1145–1159 are compositionally biased toward basic and acidic residues; it reads ELRRRSAEPSDREPE. The disordered stretch occupies residues 1145 to 1168; that stretch reads ELRRRSAEPSDREPECTQPEPTGD.

As to quaternary structure, interacts with APPL2 (via BAR domain); interaction is dependent of TBC1D1 phosphorylation at Ser-235; interaction diminishes the phosphorylation of TBC1D1 at Thr-596, resulting in inhibition of SLC2A4/GLUT4 translocation and glucose uptake. Post-translationally, insulin-stimulated phosphorylation by AKT family kinases stimulates SLC2A4/GLUT4 translocation.

Its subcellular location is the nucleus. Functionally, may act as a GTPase-activating protein for Rab family protein(s). May play a role in the cell cycle and differentiation of various tissues. Involved in the trafficking and translocation of GLUT4-containing vesicles and insulin-stimulated glucose uptake into cells. This Homo sapiens (Human) protein is TBC1 domain family member 1 (TBC1D1).